A 742-amino-acid chain; its full sequence is Potassium transporter 19 (742 aa).

At 1 to 46 the chain is on the cytoplasmic side; it reads MSVQEDGAARPEPDVLRRHDSLYGDAEKVSNNKRHGAGGSWARTLQ. A helical transmembrane segment spans residues 47–67; that stretch reads LAFQSIGVVYGDVGTSPLYVY. The Extracellular portion of the chain corresponds to 68–83; that stretch reads SSTFPNGIKHPDDLVG. The chain crosses the membrane as a helical span at residues 84-104; sequence VLSLILYTLILIPMVKYVFIV. The Cytoplasmic segment spans residues 105–170; it reads LYANDNGDGG…QKLESSNAAK (66 aa). A helical transmembrane segment spans residues 171-191; that stretch reads IALFTITILGTSMVMGDGTLT. At 192–206 the chain is on the extracellular side; it reads PAISVLSAVSGIREK. Residues 207–227 traverse the membrane as a helical segment; it reads APNLTQSQVVWISVAILFVLF. Over 228–236 the chain is Cytoplasmic; it reads SMQRFGTDK. Residues 237 to 257 traverse the membrane as a helical segment; it reads VGYTFAPVISVWFLLIAGIGM. The Extracellular segment spans residues 258-287; the sequence is YNLTVHEITILRAFNPKYIVDYFRRNGKEA. Asparagine 259 carries an N-linked (GlcNAc...) asparagine glycan. A helical membrane pass occupies residues 288–308; it reads WVSLGGVVLCITGTEAMFADL. Residues 309–317 are Cytoplasmic-facing; that stretch reads GHFNIRAIQ. Residues 318 to 338 form a helical membrane-spanning segment; that stretch reads LSFTCVLFPSVALCYMGQAAY. Over 339–352 the chain is Extracellular; it reads LRKFPENVGDTFYR. The chain crosses the membrane as a helical span at residues 353–373; that stretch reads SIPAPLFWPVFVVAIMGAIIA. The Cytoplasmic portion of the chain corresponds to 374–409; the sequence is SQAMLSGAFAILSKALSLGCFPRVEVVHTSNKYEGQ. Residues 410-430 form a helical membrane-spanning segment; that stretch reads VYIPEVNFLIGAASVAVTLAF. Topologically, residues 431 to 441 are extracellular; that stretch reads QTTANIGNAYG. The chain crosses the membrane as a helical span at residues 442 to 462; that stretch reads ICVVTVFSITTHLMTVVMLLI. Topologically, residues 463–468 are cytoplasmic; it reads WKVRLP. Residues 469–489 form a helical membrane-spanning segment; sequence FIAAFYAAFGLAEFLYLSSIL. Over 490–495 the chain is Extracellular; sequence SKFAEG. Residues 496–516 traverse the membrane as a helical segment; it reads GYLPFCFSLVLMALMATWHYV. At 517 to 742 the chain is on the cytoplasmic side; the sequence is HVKRYWYELD…LLKVGITYEI (226 aa).

This sequence belongs to the HAK/KUP transporter (TC 2.A.72.3) family.

It is found in the membrane. Its function is as follows. High-affinity potassium transporter. The chain is Potassium transporter 19 (HAK19) from Oryza sativa subsp. japonica (Rice).